We begin with the raw amino-acid sequence, 556 residues long: Arginine--tRNA ligase (556 aa).

The 'HIGH' region signature appears at 133–143 (ANPTGPIHIGH).

The protein belongs to the class-I aminoacyl-tRNA synthetase family. Monomer.

The protein resides in the cytoplasm. The enzyme catalyses tRNA(Arg) + L-arginine + ATP = L-arginyl-tRNA(Arg) + AMP + diphosphate. This Dehalococcoides mccartyi (strain CBDB1) protein is Arginine--tRNA ligase.